Reading from the N-terminus, the 399-residue chain is Insertion element IS900 uncharacterized 42 kDa protein (399 aa).

The protein belongs to the transposase IS1111A/IS1328/IS1533 family.

The polypeptide is Insertion element IS900 uncharacterized 42 kDa protein (Mycobacterium paratuberculosis).